The chain runs to 219 residues: Salivary IL-4-inducing protein (219 aa).

The first 19 residues, 1–19 (MKYLLTLLMALSLVNLMLT), serve as a signal peptide directing secretion. Residues 19–109 (TRPTPEDDGG…KNDPRETYNK (91 aa)) are disordered. Positions 30 to 43 (SEEPQTQETTGETT) are enriched in low complexity. Positions 72 to 107 (DDTAKKEDDGESKDGEGSEKSDKEKGEPKNDPRETY) are enriched in basic and acidic residues.

Salivary gland (at protein level).

It is found in the secreted. In terms of biological role, induces expression of IL4 in host skin by diverting host CD4 cells away from Th1 and towards Th2 responsiveness. Induces expression of IL10 in host skin. Down-regulates expression of IL12B, IFN-gamma (IFNG) and TNF-alpha (TNF) in host skin. This Aedes aegypti (Yellowfever mosquito) protein is Salivary IL-4-inducing protein.